The chain runs to 233 residues: Large ribosomal subunit protein uL1 (233 aa).

It belongs to the universal ribosomal protein uL1 family. In terms of assembly, part of the 50S ribosomal subunit.

Functionally, binds directly to 23S rRNA. The L1 stalk is quite mobile in the ribosome, and is involved in E site tRNA release. In terms of biological role, protein L1 is also a translational repressor protein, it controls the translation of the L11 operon by binding to its mRNA. The sequence is that of Large ribosomal subunit protein uL1 from Hamiltonella defensa subsp. Acyrthosiphon pisum (strain 5AT).